A 214-amino-acid polypeptide reads, in one-letter code: Probable nicotinate-nucleotide adenylyltransferase (214 aa).

The protein belongs to the NadD family.

It carries out the reaction nicotinate beta-D-ribonucleotide + ATP + H(+) = deamido-NAD(+) + diphosphate. Its pathway is cofactor biosynthesis; NAD(+) biosynthesis; deamido-NAD(+) from nicotinate D-ribonucleotide: step 1/1. Functionally, catalyzes the reversible adenylation of nicotinate mononucleotide (NaMN) to nicotinic acid adenine dinucleotide (NaAD). This is Probable nicotinate-nucleotide adenylyltransferase from Pseudomonas paraeruginosa (strain DSM 24068 / PA7) (Pseudomonas aeruginosa (strain PA7)).